Here is a 194-residue protein sequence, read N- to C-terminus: ATP-dependent Clp protease proteolytic subunit (194 aa).

Ser97 functions as the Nucleophile in the catalytic mechanism. His122 is an active-site residue.

The protein belongs to the peptidase S14 family. Fourteen ClpP subunits assemble into 2 heptameric rings which stack back to back to give a disk-like structure with a central cavity, resembling the structure of eukaryotic proteasomes.

It is found in the cytoplasm. It catalyses the reaction Hydrolysis of proteins to small peptides in the presence of ATP and magnesium. alpha-casein is the usual test substrate. In the absence of ATP, only oligopeptides shorter than five residues are hydrolyzed (such as succinyl-Leu-Tyr-|-NHMec, and Leu-Tyr-Leu-|-Tyr-Trp, in which cleavage of the -Tyr-|-Leu- and -Tyr-|-Trp bonds also occurs).. Functionally, cleaves peptides in various proteins in a process that requires ATP hydrolysis. Has a chymotrypsin-like activity. Plays a major role in the degradation of misfolded proteins. The chain is ATP-dependent Clp protease proteolytic subunit from Campylobacter jejuni subsp. jejuni serotype O:23/36 (strain 81-176).